The following is a 204-amino-acid chain: Dual specificity protein phosphatase 18 (204 aa).

Residues 19-160 (GLSQITKSLF…LIHYEFQLFG (142 aa)) form the Tyrosine-protein phosphatase domain. The sufficient for mitochondrial localization stretch occupies residues 95–141 (MKQGRTLLHCAAGVSRSAALCLAYLMKYHVMSLLDAHAWTKSRRPII). The active-site Phosphocysteine intermediate is the C104.

The protein belongs to the protein-tyrosine phosphatase family. Non-receptor class dual specificity subfamily.

Its subcellular location is the cytoplasm. It localises to the nucleus. The protein localises to the mitochondrion inner membrane. The catalysed reaction is O-phospho-L-tyrosyl-[protein] + H2O = L-tyrosyl-[protein] + phosphate. It carries out the reaction O-phospho-L-seryl-[protein] + H2O = L-seryl-[protein] + phosphate. The enzyme catalyses O-phospho-L-threonyl-[protein] + H2O = L-threonyl-[protein] + phosphate. In terms of biological role, can dephosphorylate single and diphosphorylated synthetic MAPK peptides, with preference for the phosphotyrosine and diphosphorylated forms over phosphothreonine. In vitro, dephosphorylates p-nitrophenyl phosphate (pNPP). In Rattus norvegicus (Rat), this protein is Dual specificity protein phosphatase 18 (Dusp18).